Consider the following 379-residue polypeptide: Mannan endo-1,4-beta-mannosidase 7 (379 aa).

The substrate site is built by W64 and N179. E180 functions as the Proton donor in the catalytic mechanism. Y260 serves as a coordination point for substrate. E300 (nucleophile) is an active-site residue. W342 contributes to the substrate binding site.

This sequence belongs to the glycosyl hydrolase 5 (cellulase A) family. In terms of tissue distribution, expression not detected.

The catalysed reaction is Random hydrolysis of (1-&gt;4)-beta-D-mannosidic linkages in mannans, galactomannans and glucomannans.. This is Mannan endo-1,4-beta-mannosidase 7 (MAN7) from Oryza sativa subsp. japonica (Rice).